Consider the following 327-residue polypeptide: Replication factor C small subunit (327 aa).

47–54 is a binding site for ATP; the sequence is GPPGTGKT.

Belongs to the activator 1 small subunits family. RfcS subfamily. In terms of assembly, heteromultimer composed of small subunits (RfcS) and large subunits (RfcL).

Functionally, part of the RFC clamp loader complex which loads the PCNA sliding clamp onto DNA. The polypeptide is Replication factor C small subunit (Sulfurisphaera tokodaii (strain DSM 16993 / JCM 10545 / NBRC 100140 / 7) (Sulfolobus tokodaii)).